Here is a 673-residue protein sequence, read N- to C-terminus: Probable multidrug resistance ABC transporter ATP-binding/permease protein YheH (673 aa).

5 consecutive transmembrane segments (helical) span residues 18–38 (LITA…GPFI), 146–166 (IKGM…SVFF), 223–243 (LYVT…GIFT), 245–265 (LFLL…IIWL), and 347–367 (LAFV…AGIV). One can recognise an ABC transmembrane type-1 domain in the interval 18–398 (LITAVLLLTV…IVNQFSKLEL (381 aa)). The ABC transporter domain maps to 430–664 (VEFRDVSFAY…EGQYYQMYEL (235 aa)). An ATP-binding site is contributed by 463–470 (GHTGSGKS).

It belongs to the ABC transporter superfamily. As to quaternary structure, heterodimer composed of YheH and YheI.

The protein resides in the cell membrane. Its activity is regulated as follows. Inhibited by ortho-vanadate. Involved in the transport of four structurally unrelated drugs, including doxorubicin and mitoxantrone. Transmembrane domains (TMD) form a pore in the membrane and the ATP-binding domain (NBD) is responsible for energy generation. In Bacillus subtilis (strain 168), this protein is Probable multidrug resistance ABC transporter ATP-binding/permease protein YheH (yheH).